The chain runs to 71 residues: Small ribosomal subunit protein bS21 (71 aa).

This sequence belongs to the bacterial ribosomal protein bS21 family.

The protein is Small ribosomal subunit protein bS21 of Wigglesworthia glossinidia brevipalpis.